We begin with the raw amino-acid sequence, 385 residues long: 4-hydroxy-3-methylbut-2-en-1-yl diphosphate synthase (flavodoxin) 2 (385 aa).

Residues C280, C283, C315, and E322 each contribute to the [4Fe-4S] cluster site.

The protein belongs to the IspG family. The cofactor is [4Fe-4S] cluster.

It carries out the reaction (2E)-4-hydroxy-3-methylbut-2-enyl diphosphate + oxidized [flavodoxin] + H2O + 2 H(+) = 2-C-methyl-D-erythritol 2,4-cyclic diphosphate + reduced [flavodoxin]. It functions in the pathway isoprenoid biosynthesis; isopentenyl diphosphate biosynthesis via DXP pathway; isopentenyl diphosphate from 1-deoxy-D-xylulose 5-phosphate: step 5/6. Its function is as follows. Converts 2C-methyl-D-erythritol 2,4-cyclodiphosphate (ME-2,4cPP) into 1-hydroxy-2-methyl-2-(E)-butenyl 4-diphosphate. The sequence is that of 4-hydroxy-3-methylbut-2-en-1-yl diphosphate synthase (flavodoxin) 2 from Streptomyces coelicolor (strain ATCC BAA-471 / A3(2) / M145).